The chain runs to 240 residues: NADPH-flavin oxidoreductase (240 aa).

Residues 11 to 15 (HRSIR), serine 39, 67 to 69 (QAY), 128 to 131 (YIGG), and 167 to 169 (KPR) each bind FMN.

This sequence belongs to the flavin oxidoreductase frp family. As to quaternary structure, homodimer.

The catalysed reaction is FMNH2 + NADP(+) = FMN + NADPH + 2 H(+). Functionally, catalyzes the NADPH-dependent reduction of FMN to FMNH(2). Involved in bioluminescence by providing FMNH(2) to luciferase. The protein is NADPH-flavin oxidoreductase of Vibrio harveyi (Beneckea harveyi).